The primary structure comprises 339 residues: Ketol-acid reductoisomerase (NADP(+)) (339 aa).

The KARI N-terminal Rossmann domain occupies 1-182; the sequence is MPNRYYEKDG…GCLKAGVIDT (182 aa). NADP(+) contacts are provided by residues 25 to 28, serine 51, serine 53, and 83 to 86; these read YGSQ and DHIQ. Residue histidine 108 is part of the active site. Residue glycine 134 coordinates NADP(+). The KARI C-terminal knotted domain occupies 183-328; sequence NFREETESDL…RELREMMTFL (146 aa). Residues aspartate 191, glutamate 195, glutamate 227, and glutamate 231 each contribute to the Mg(2+) site. Substrate is bound at residue serine 252.

It belongs to the ketol-acid reductoisomerase family. The cofactor is Mg(2+).

The enzyme catalyses (2R)-2,3-dihydroxy-3-methylbutanoate + NADP(+) = (2S)-2-acetolactate + NADPH + H(+). The catalysed reaction is (2R,3R)-2,3-dihydroxy-3-methylpentanoate + NADP(+) = (S)-2-ethyl-2-hydroxy-3-oxobutanoate + NADPH + H(+). It functions in the pathway amino-acid biosynthesis; L-isoleucine biosynthesis; L-isoleucine from 2-oxobutanoate: step 2/4. The protein operates within amino-acid biosynthesis; L-valine biosynthesis; L-valine from pyruvate: step 2/4. Its function is as follows. Involved in the biosynthesis of branched-chain amino acids (BCAA). Catalyzes an alkyl-migration followed by a ketol-acid reduction of (S)-2-acetolactate (S2AL) to yield (R)-2,3-dihydroxy-isovalerate. In the isomerase reaction, S2AL is rearranged via a Mg-dependent methyl migration to produce 3-hydroxy-3-methyl-2-ketobutyrate (HMKB). In the reductase reaction, this 2-ketoacid undergoes a metal-dependent reduction by NADPH to yield (R)-2,3-dihydroxy-isovalerate. The polypeptide is Ketol-acid reductoisomerase (NADP(+)) (Solibacter usitatus (strain Ellin6076)).